A 206-amino-acid polypeptide reads, in one-letter code: 2-phospho-L-lactate guanylyltransferase (206 aa).

Belongs to the CofC family. As to quaternary structure, homodimer.

The catalysed reaction is (2S)-2-phospholactate + GTP + H(+) = (2S)-lactyl-2-diphospho-5'-guanosine + diphosphate. The protein operates within cofactor biosynthesis; coenzyme F420 biosynthesis. Guanylyltransferase that catalyzes the activation of (2S)-2-phospholactate (2-PL) as (2S)-lactyl-2-diphospho-5'-guanosine, via the condensation of 2-PL with GTP. It is involved in the biosynthesis of coenzyme F420, a hydride carrier cofactor. The polypeptide is 2-phospho-L-lactate guanylyltransferase (Archaeoglobus profundus (strain DSM 5631 / JCM 9629 / NBRC 100127 / Av18)).